The following is a 268-amino-acid chain: 4-diphosphocytidyl-2-C-methyl-D-erythritol kinase (268 aa).

K10 is a catalytic residue. Position 101 to 111 (101 to 111 (PTQAGLGGGST)) interacts with ATP. Residue D143 is part of the active site.

It belongs to the GHMP kinase family. IspE subfamily.

The enzyme catalyses 4-CDP-2-C-methyl-D-erythritol + ATP = 4-CDP-2-C-methyl-D-erythritol 2-phosphate + ADP + H(+). The protein operates within isoprenoid biosynthesis; isopentenyl diphosphate biosynthesis via DXP pathway; isopentenyl diphosphate from 1-deoxy-D-xylulose 5-phosphate: step 3/6. Functionally, catalyzes the phosphorylation of the position 2 hydroxy group of 4-diphosphocytidyl-2C-methyl-D-erythritol. This Helicobacter pylori (strain ATCC 700392 / 26695) (Campylobacter pylori) protein is 4-diphosphocytidyl-2-C-methyl-D-erythritol kinase.